Reading from the N-terminus, the 361-residue chain is Hydroxycarboxylate dehydrogenase B (361 aa).

Residues H48, 122 to 124 (GRI), 178 to 182 (LLDYA), H234, N270, and 313 to 316 (GEWE) each bind NAD(+).

It belongs to the LDH2/MDH2 oxidoreductase family.

It catalyses the reaction 2-hydroxyglutarate + NADP(+) = 2-oxoglutarate + NADPH + H(+). The catalysed reaction is 2-hydroxyglutarate + NAD(+) = 2-oxoglutarate + NADH + H(+). The enzyme catalyses 3-phenyllactate + NADP(+) = 3-phenylpyruvate + NADPH + H(+). It carries out the reaction 3-phenyllactate + NAD(+) = 3-phenylpyruvate + NADH + H(+). It catalyses the reaction (2R)-2-hydroxy-3-(4-hydroxyphenyl)propanoate + NAD(+) = 3-(4-hydroxyphenyl)pyruvate + NADH + H(+). The catalysed reaction is (2R)-2-hydroxy-3-(4-hydroxyphenyl)propanoate + NADP(+) = 3-(4-hydroxyphenyl)pyruvate + NADPH + H(+). The enzyme catalyses (2R)-3-(3,4-dihydroxyphenyl)lactate + NADP(+) = 3-(3,4-dihydroxyphenyl)pyruvate + NADPH + H(+). It carries out the reaction (2R)-3-(3,4-dihydroxyphenyl)lactate + NAD(+) = 3-(3,4-dihydroxyphenyl)pyruvate + NADH + H(+). Its function is as follows. Catalyzes the NAD(P)H-dependent reduction of 2-oxoglutarate, phenylpyruvate and (4-hydroxyphenyl)pyruvate, leading to the respective 2-hydroxycarboxylate in vitro. Shows a preference for NADPH over NADH as a redox partner. Do not catalyze the reverse reactions. The sequence is that of Hydroxycarboxylate dehydrogenase B from Escherichia coli O157:H7.